The primary structure comprises 271 residues: Diaminopimelate epimerase (271 aa).

Positions 13, 46, and 66 each coordinate substrate. Cys75 acts as the Proton donor in catalysis. Substrate-binding positions include 76–77 (GN), Asn155, Asn188, and 206–207 (ER). Cys215 serves as the catalytic Proton acceptor. 216-217 (GS) lines the substrate pocket.

It belongs to the diaminopimelate epimerase family. In terms of assembly, homodimer.

Its subcellular location is the cytoplasm. The enzyme catalyses (2S,6S)-2,6-diaminopimelate = meso-2,6-diaminopimelate. It participates in amino-acid biosynthesis; L-lysine biosynthesis via DAP pathway; DL-2,6-diaminopimelate from LL-2,6-diaminopimelate: step 1/1. Catalyzes the stereoinversion of LL-2,6-diaminopimelate (L,L-DAP) to meso-diaminopimelate (meso-DAP), a precursor of L-lysine and an essential component of the bacterial peptidoglycan. The sequence is that of Diaminopimelate epimerase from Vesicomyosocius okutanii subsp. Calyptogena okutanii (strain HA).